Reading from the N-terminus, the 169-residue chain is Probable actin-related protein 2/3 complex subunit 4 (169 aa).

The protein belongs to the ARPC4 family. In terms of assembly, component of the Arp2/3 complex, at least composed of arx-1, arx-2, arx-4 and arx-6.

It localises to the cytoplasm. It is found in the cytoskeleton. Functions as actin-binding component of the Arp2/3 complex which is involved in regulation of actin polymerization and together with an activating nucleation-promoting factor (NPF) mediates the formation of branched actin networks. Seems to contact the mother actin filament. Plays a role in time-dependent memory loss and the retention of conditioned behavior over time. In Caenorhabditis elegans, this protein is Probable actin-related protein 2/3 complex subunit 4.